The following is a 427-amino-acid chain: MMTMRIAMISIHTSPLQQPGSGDAGGMNVYIISIARELARRGVDVDIYTRATRPSQGDVVEVESGLRVINIVAGPYEGLSKEELPTQLAAFAGGVVQFAKCHHMRYDVIHSHYWLSGQVGWLLRDLWNIPLVHTAHTLAAVKNAHRSAGDTEESEARRICEQQLVDNADILVVNTPEETNDLVRHYDANPDSVAVIAPGANVELFTPGTQRNTEQSRRCLGIPLHTKVMAFVGRLQQFKGPEVLLRAVAEMLERDPDRDMRVIMCGGPSGAAATVEHYIELTRSLGIAHRVRFLDPRPPEELVSVYQAADVVAVPSYNESFGLVAMEAQASGTPVVAARVGGLPIAVVDGETGVLVDGHDPIMWADALEQLLDDDPTRQQMGVAAVEHAANFTWAAAAEKLESVYGDAAMLDVAQCHDRYAAGSDRA.

A 1D-myo-inositol 3-phosphate-binding site is contributed by His12. UDP-N-acetyl-alpha-D-glucosamine-binding positions include 18–19 (QP) and Gly26. Residues 23 to 28 (DAGGMN), Lys81, Tyr113, Thr137, and Arg157 each bind 1D-myo-inositol 3-phosphate. Residues Arg234, Lys239, and Arg297 each contribute to the UDP-N-acetyl-alpha-D-glucosamine site. Mg(2+) contacts are provided by Tyr306, Gln307, and Ala309. UDP-N-acetyl-alpha-D-glucosamine-binding residues include Glu319 and Glu327. Thr333 lines the Mg(2+) pocket.

This sequence belongs to the glycosyltransferase group 1 family. MshA subfamily. In terms of assembly, homodimer.

It catalyses the reaction 1D-myo-inositol 3-phosphate + UDP-N-acetyl-alpha-D-glucosamine = 1D-myo-inositol 2-acetamido-2-deoxy-alpha-D-glucopyranoside 3-phosphate + UDP + H(+). Its function is as follows. Catalyzes the transfer of a N-acetyl-glucosamine moiety to 1D-myo-inositol 3-phosphate to produce 1D-myo-inositol 2-acetamido-2-deoxy-glucopyranoside 3-phosphate in the mycothiol biosynthesis pathway. The sequence is that of D-inositol 3-phosphate glycosyltransferase from Corynebacterium diphtheriae (strain ATCC 700971 / NCTC 13129 / Biotype gravis).